A 141-amino-acid polypeptide reads, in one-letter code: Hemoglobin subunit alpha-2 (141 aa).

The 141-residue stretch at 1 to 141 folds into the Globin domain; that stretch reads VLSSQDKANV…VKHVLTSKYR (141 aa). His58 provides a ligand contact to O2. Position 87 (His87) interacts with heme b.

Belongs to the globin family. In terms of assembly, minor hemoglobin is a heterotetramer of two alpha-2 chains and two beta-2 chains. As to expression, red blood cells.

Functionally, involved in oxygen transport from the lung to the various peripheral tissues. The protein is Hemoglobin subunit alpha-2 of Triturus cristatus (Great crested newt).